The chain runs to 363 residues: Ferrochelatase (363 aa).

The Fe cation site is built by His-209 and Glu-290.

The protein belongs to the ferrochelatase family.

The protein localises to the cytoplasm. The enzyme catalyses heme b + 2 H(+) = protoporphyrin IX + Fe(2+). The protein operates within porphyrin-containing compound metabolism; protoheme biosynthesis; protoheme from protoporphyrin-IX: step 1/1. Catalyzes the ferrous insertion into protoporphyrin IX. The sequence is that of Ferrochelatase from Azoarcus sp. (strain BH72).